Here is a 1647-residue protein sequence, read N- to C-terminus: Cortactin-binding protein 2 (1647 aa).

5 disordered regions span residues M1–A27, E202–E222, H318–L427, G440–L468, and L482–D604. Residues K120–K276 are a coiled coil. A compositionally biased stretch (low complexity) spans S362–A372. Positions G379–L388 are enriched in polar residues. Low complexity predominate over residues P389 to A411. Residues G440–D466 are compositionally biased toward polar residues. R484 carries the asymmetric dimethylarginine modification. Low complexity predominate over residues P488–P509. Over residues T569–Q579 the composition is skewed to polar residues. ANK repeat units lie at residues G695–Y725, D729–A758, N762–H791, G795–V824, and D828–G857. A disordered region spans residues H856–V886. Over residues N861–E880 the composition is skewed to acidic residues. The ANK 6 repeat unit spans residues E898–R928. The tract at residues E1436–E1467 is disordered. S1509 carries the post-translational modification Phosphoserine. The interval R1542–T1647 is disordered. Composition is skewed to polar residues over residues F1544 to N1559 and K1567 to K1584. A compositionally biased stretch (low complexity) spans S1609–Q1623. The span at S1630–T1647 shows a compositional bias: basic and acidic residues.

As to quaternary structure, interacts with CTTN/cortactin SH3 domain. Interacts with STRN, STRN4/zinedin and MOB4/phocein; this interactions mediate the association with the STRIPAK core complex and may regulate dendritic spine distribution of the STRIPAK complex in hippocampal neurons. Activation of glutamate receptors weakens the interaction with STRN and STRN4.

The protein localises to the cytoplasm. The protein resides in the cell cortex. It localises to the cell projection. It is found in the dendritic spine. In terms of biological role, regulates the dendritic spine distribution of CTTN/cortactin in hippocampal neurons, and thus controls dendritic spinogenesis and dendritic spine maintenance. Associates with the striatin-interacting phosphatase and kinase (STRIPAK) core complex to regulate dendritic spine distribution of the STRIPAK complex in hippocampal neurons. This is Cortactin-binding protein 2 (CTTNBP2) from Microcebus murinus (Gray mouse lemur).